We begin with the raw amino-acid sequence, 92 residues long: Probable Fe(2+)-trafficking protein (92 aa).

Belongs to the Fe(2+)-trafficking protein family.

Its function is as follows. Could be a mediator in iron transactions between iron acquisition and iron-requiring processes, such as synthesis and/or repair of Fe-S clusters in biosynthetic enzymes. In Shewanella halifaxensis (strain HAW-EB4), this protein is Probable Fe(2+)-trafficking protein.